The primary structure comprises 297 residues: MFNLKYFLVSSSLLFSVFSSPVFSNPKVLKVGAIPDQNQDVLDKRFNLFSKELSKQLDVEVKYIPVINYIAAVTGFRTKDLDLVWFGGLSGVQARLQTPNSIVIAQRDIDKEFKSVFVVNKNLELNSISNIKGLKKLKNLRFTFGSENSTSGRLMPEYFLNQAGVEIKHFKGKKAGFSGSHDATIALVNSGAFDAGALNKQVWENNLKNNPKRTSNLELFWITPEYVDYHWVAQGDLENRFGEGFTKELKSVILNLDIKQKSHKQILDMFNAKRFIKAESKQYKNIEEIGRKLNKIR.

An N-terminal signal peptide occupies residues 1–24 (MFNLKYFLVSSSLLFSVFSSPVFS).

Belongs to the phosphate/phosphite/phosphonate binding protein family. The complex may be composed of two ATP-binding proteins (PhnC1), two transmembrane proteins (PhnE1) and a solute-binding protein (PhnD1).

It is found in the periplasm. Probably part of the ABC transporter complex PhnD1C1E1. Binds strongly to inorganic phosphite and with very weak affinities to methylphosphonate (MPn) and phosphate. In Prochlorococcus marinus (strain MIT 9301), this protein is Probable ABC transporter phosphite binding protein PhnD1.